The sequence spans 143 residues: Ribulose bisphosphate carboxylase large chain (143 aa).

Residues 1–2 (MS) constitute a propeptide that is removed on maturation. At proline 3 the chain carries N-acetylproline. N6,N6,N6-trimethyllysine is present on lysine 14. Residue residue 123 coordinates substrate.

Belongs to the RuBisCO large chain family. Type I subfamily. Heterohexadecamer of 8 large chains and 8 small chains.

Its subcellular location is the plastid. It is found in the chloroplast. It carries out the reaction 2 (2R)-3-phosphoglycerate + 2 H(+) = D-ribulose 1,5-bisphosphate + CO2 + H2O. The catalysed reaction is D-ribulose 1,5-bisphosphate + O2 = 2-phosphoglycolate + (2R)-3-phosphoglycerate + 2 H(+). Functionally, ruBisCO catalyzes two reactions: the carboxylation of D-ribulose 1,5-bisphosphate, the primary event in carbon dioxide fixation, as well as the oxidative fragmentation of the pentose substrate in the photorespiration process. Both reactions occur simultaneously and in competition at the same active site. This Nemopanthus mucronatus (Catberry) protein is Ribulose bisphosphate carboxylase large chain (rbcL).